Consider the following 271-residue polypeptide: uncharacterized protein (271 aa).

Transmembrane regions (helical) follow at residues 11-33 (GWLA…LAPW), 172-194 (SINT…LQLI), and 214-236 (FLSY…GYFA). The segment at 245-271 (REKAGSPPPDKPMTVEQKLADRYGRRR) is disordered. A compositionally biased stretch (basic and acidic residues) spans 262–271 (KLADRYGRRR).

Belongs to the SURF1 family.

The protein localises to the cell membrane. This is an uncharacterized protein from Mycobacterium tuberculosis (strain CDC 1551 / Oshkosh).